The chain runs to 176 residues: ATP synthase subunit delta (176 aa).

The protein belongs to the ATPase delta chain family. As to quaternary structure, F-type ATPases have 2 components, F(1) - the catalytic core - and F(0) - the membrane proton channel. F(1) has five subunits: alpha(3), beta(3), gamma(1), delta(1), epsilon(1). F(0) has three main subunits: a(1), b(2) and c(10-14). The alpha and beta chains form an alternating ring which encloses part of the gamma chain. F(1) is attached to F(0) by a central stalk formed by the gamma and epsilon chains, while a peripheral stalk is formed by the delta and b chains.

It is found in the cell membrane. In terms of biological role, f(1)F(0) ATP synthase produces ATP from ADP in the presence of a proton or sodium gradient. F-type ATPases consist of two structural domains, F(1) containing the extramembraneous catalytic core and F(0) containing the membrane proton channel, linked together by a central stalk and a peripheral stalk. During catalysis, ATP synthesis in the catalytic domain of F(1) is coupled via a rotary mechanism of the central stalk subunits to proton translocation. Functionally, this protein is part of the stalk that links CF(0) to CF(1). It either transmits conformational changes from CF(0) to CF(1) or is implicated in proton conduction. The protein is ATP synthase subunit delta of Wigglesworthia glossinidia brevipalpis.